A 223-amino-acid polypeptide reads, in one-letter code: Phosphoribosylformylglycinamidine synthase subunit PurQ (223 aa).

A Glutamine amidotransferase type-1 domain is found at Phe-3–Val-223. The active-site Nucleophile is the Cys-85. Residues His-193 and Glu-195 contribute to the active site.

In terms of assembly, part of the FGAM synthase complex composed of 1 PurL, 1 PurQ and 2 PurS subunits.

It is found in the cytoplasm. It catalyses the reaction N(2)-formyl-N(1)-(5-phospho-beta-D-ribosyl)glycinamide + L-glutamine + ATP + H2O = 2-formamido-N(1)-(5-O-phospho-beta-D-ribosyl)acetamidine + L-glutamate + ADP + phosphate + H(+). The enzyme catalyses L-glutamine + H2O = L-glutamate + NH4(+). It functions in the pathway purine metabolism; IMP biosynthesis via de novo pathway; 5-amino-1-(5-phospho-D-ribosyl)imidazole from N(2)-formyl-N(1)-(5-phospho-D-ribosyl)glycinamide: step 1/2. Its function is as follows. Part of the phosphoribosylformylglycinamidine synthase complex involved in the purines biosynthetic pathway. Catalyzes the ATP-dependent conversion of formylglycinamide ribonucleotide (FGAR) and glutamine to yield formylglycinamidine ribonucleotide (FGAM) and glutamate. The FGAM synthase complex is composed of three subunits. PurQ produces an ammonia molecule by converting glutamine to glutamate. PurL transfers the ammonia molecule to FGAR to form FGAM in an ATP-dependent manner. PurS interacts with PurQ and PurL and is thought to assist in the transfer of the ammonia molecule from PurQ to PurL. In Staphylococcus aureus (strain MSSA476), this protein is Phosphoribosylformylglycinamidine synthase subunit PurQ.